The chain runs to 482 residues: Glucose starvation modulator protein 1 (482 aa).

Positions C20–C48 form a DNA-binding region, zn(2)-C6 fungal-type. The 73-residue stretch at L350–S422 folds into the PAS domain.

The protein belongs to the ERT1/acuK family.

The protein localises to the nucleus. Transcription factor which regulates nonfermentable carbon utilization. The protein is Glucose starvation modulator protein 1 (GSM1) of Eremothecium gossypii (strain ATCC 10895 / CBS 109.51 / FGSC 9923 / NRRL Y-1056) (Yeast).